We begin with the raw amino-acid sequence, 380 residues long: Proline iminopeptidase (380 aa).

The region spanning 98–360 (PVVFLHGGPG…IVYDAGHSAN (263 aa)) is the AB hydrolase-1 domain. Serine 172 (nucleophile) is an active-site residue. Aspartate 329 is an active-site residue. Histidine 357 acts as the Proton donor in catalysis.

This sequence belongs to the peptidase S33 family.

The protein resides in the cytoplasm. It carries out the reaction Release of N-terminal proline from a peptide.. Its function is as follows. Specifically catalyzes the removal of N-terminal proline residues from peptides. This is Proline iminopeptidase (PIP) from Arabidopsis thaliana (Mouse-ear cress).